The primary structure comprises 760 residues: MENNRNFPARQFHSLTFFAGLCIGITPVAQALAAEGQTNADDTLVVEASTPSLYAPQQSADPKFSRPVADTTRTMTVISEQVIKDQGATNLTDALKNVPGVGAFFAGENGNSTTGDAIYMRGADTSNSIYIDGIRDIGSVSRDTFNTEQVEVIKGPSGTDYGRSAPTGSINMISKQPRNDSGIDASASIGSAWFRRGTLDVNQVIGDTTAVRLNVMGEKTHDAGRDKVKNERYGVAPSVAFGLGTANRLYLNYLHVTQHNTPDGGIPTIGLPGYSAPSAGTAALNHSGKVDTHNFYGTDSDYDDSTTDTATMRFEHDINDNTTIRNTTRWSRVKQDYLMTAIMGGASNITQPTSDVNSWTWSRTANTKDVSNKILTNQTNLTSTFYTGSIGHDVSTGVEFTRETQTNYGVNPVTLPAVNIYHPDSSIHPGGLTRNGANANGQTDTFAIYAFDTLQITRDFELNGGIRLDNYHTEYDSATACGGSGRGAITCPTGVAKGSPVTTVDTAKSGNLMNWKAGALYHLTENGNVYINYAVSQQPPGGNNFALAQSGSGNSANRTDFKPQKANTSEIGTKWQVLDKRLLLTAALFRTDIENEVEQNDDGTYSQYGKKRVEGYEISVAGNITPAWQVIGGYTQQKATIKNGKDVAQDGSSSLPYTPEHAFTLWSQYQATDDISVGAGARYIGSMHKGSDGAVGTPAFTEGYWVADAKLGYRVNRNLDFQLNVYNLFDTDYVASINKSGYRYHPGEPRTFLLTANMHF.

A signal peptide spans 1–31; it reads MENNRNFPARQFHSLTFFAGLCIGITPVAQA. The 109-residue stretch at 67 to 175 folds into the TBDR plug domain; that stretch reads PVADTTRTMT…PTGSINMISK (109 aa). In terms of domain architecture, TBDR beta-barrel spans 180–760; it reads DSGIDASASI…TFLLTANMHF (581 aa). The TonB C-terminal box motif lies at 743 to 760; the sequence is RYHPGEPRTFLLTANMHF.

Belongs to the TonB-dependent receptor family.

It is found in the cell outer membrane. In terms of biological role, involved in the active transport across the outer membrane of iron complexed with catecholate siderophores such as dihydroxybenzoylserine and dihydroxybenzoate. It derives its energy for transport by interacting with the trans-periplasmic membrane protein TonB. Can also transport catechol-substituted cephalosporins. Receptor for microcins M, H47 and E492. The protein is Catecholate siderophore receptor Fiu (fiu) of Escherichia coli (strain K12).